The following is a 438-amino-acid chain: uncharacterized protein (438 aa).

The FAD-binding PCMH-type domain maps to 23–193 (IHAKPPVVVV…VNATIRLTAA (171 aa)). FAD contacts are provided by residues 55–59 (VRGSG), 60–61 (HS), Gln65, Asp117, Thr122, 128–132 (SVGGF), Ile183, Tyr393, and 430–433 (APGY). His60 is subject to Pros-8alpha-FAD histidine.

Belongs to the oxygen-dependent FAD-linked oxidoreductase family. It depends on FAD as a cofactor.

The FAS-operon encodes genes involved in cytokinin production and in host plant fasciation (leafy gall). This is an uncharacterized protein from Rhodococcoides fascians (Rhodococcus fascians).